A 230-amino-acid polypeptide reads, in one-letter code: Proteasome subunit alpha (230 aa).

This sequence belongs to the peptidase T1A family. The 20S proteasome core is composed of 14 alpha and 14 beta subunits that assemble into four stacked heptameric rings, resulting in a barrel-shaped structure. The two inner rings, each composed of seven catalytic beta subunits, are sandwiched by two outer rings, each composed of seven alpha subunits. The catalytic chamber with the active sites is on the inside of the barrel. Has a gated structure, the ends of the cylinder being occluded by the N-termini of the alpha-subunits. Is capped by the proteasome-associated ATPase, ARC.

It is found in the cytoplasm. It functions in the pathway protein degradation; proteasomal Pup-dependent pathway. Its activity is regulated as follows. The formation of the proteasomal ATPase ARC-20S proteasome complex, likely via the docking of the C-termini of ARC into the intersubunit pockets in the alpha-rings, may trigger opening of the gate for substrate entry. Interconversion between the open-gate and close-gate conformations leads to a dynamic regulation of the 20S proteasome proteolysis activity. Functionally, component of the proteasome core, a large protease complex with broad specificity involved in protein degradation. The polypeptide is Proteasome subunit alpha (Thermomonospora curvata (strain ATCC 19995 / DSM 43183 / JCM 3096 / KCTC 9072 / NBRC 15933 / NCIMB 10081 / Henssen B9)).